Reading from the N-terminus, the 82-residue chain is Turripeptide OL139 (82 aa).

The interval 58–82 is disordered; that stretch reads HRTTRDTADKTHGGSQRDRFFQSIA.

Contains 6 disulfide bonds. Expressed by the venom duct.

The protein localises to the secreted. Acts as a neurotoxin by inhibiting an ion channel. The polypeptide is Turripeptide OL139 (Iotyrris olangoensis (Sea snail)).